A 353-amino-acid polypeptide reads, in one-letter code: D-alanine--D-alanine ligase (353 aa).

The 209-residue stretch at 141–349 (KAALAGAGLA…LEQLVHELLE (209 aa)) folds into the ATP-grasp domain. 176 to 231 (ESGLCYPCFIKPANLGSSVGISKARNREELIHGLRLAATLDPRLVVEQGVQARELE) serves as a coordination point for ATP. Positions 302, 316, and 318 each coordinate Mg(2+).

The protein belongs to the D-alanine--D-alanine ligase family. Mg(2+) serves as cofactor. It depends on Mn(2+) as a cofactor.

Its subcellular location is the cytoplasm. The catalysed reaction is 2 D-alanine + ATP = D-alanyl-D-alanine + ADP + phosphate + H(+). It functions in the pathway cell wall biogenesis; peptidoglycan biosynthesis. Functionally, cell wall formation. In Parasynechococcus marenigrum (strain WH8102), this protein is D-alanine--D-alanine ligase.